The following is a 445-amino-acid chain: Argininosuccinate synthase (445 aa).

ATP is bound by residues 17–25 (AFSGGLDTS) and A43. Residue Y99 coordinates L-citrulline. G129 and T131 together coordinate ATP. 3 residues coordinate L-aspartate: T131, N135, and D136. Residue N135 coordinates L-citrulline. D136 contacts ATP. L-citrulline-binding residues include R139 and S192. D194 lines the ATP pocket. L-citrulline is bound by residues T201, E203, and E280.

The protein belongs to the argininosuccinate synthase family. Type 2 subfamily. Homotetramer.

Its subcellular location is the cytoplasm. It carries out the reaction L-citrulline + L-aspartate + ATP = 2-(N(omega)-L-arginino)succinate + AMP + diphosphate + H(+). It participates in amino-acid biosynthesis; L-arginine biosynthesis; L-arginine from L-ornithine and carbamoyl phosphate: step 2/3. In Rhodopseudomonas palustris (strain ATCC BAA-98 / CGA009), this protein is Argininosuccinate synthase.